The following is a 234-amino-acid chain: bZIP transcription factor 1 (234 aa).

The interval 67–134 (RAQSDGSNAL…DKQRNAQQQL (68 aa)) is disordered. The segment covering 70–86 (SDGSNALLSSIGPSGTT) has biased composition (polar residues). The segment covering 88 to 128 (RPRDEMDCFTDTHKHKRGDGNKSRRREQCRANQARYRDKQR) has biased composition (basic and acidic residues). The 64-residue stretch at 106-169 (DGNKSRRREQ…RTNQSPWNTV (64 aa)) folds into the bZIP domain. A basic motif region spans residues 109-128 (KSRRREQCRANQARYRDKQR). The tract at residues 134–155 (LERSVEQLQSELSTLKHRNLDL) is leucine-zipper.

It belongs to the bZIP family. In terms of assembly, interacts with PKZ1.

Its subcellular location is the nucleus. In terms of biological role, required for normal zoospore movement, formation of appressoria by germinated zoospore cysts and plant infection. The sequence is that of bZIP transcription factor 1 from Phytophthora infestans (Potato late blight agent).